The chain runs to 782 residues: Translation initiation factor IF-2 (782 aa).

Positions 47–196 are disordered; sequence DNAIDGTNKK…TPPKPKELPE (150 aa). Residues 53–65 show a composition bias toward basic and acidic residues; the sequence is TNKKAEAPKKETT. Residues 66–81 are compositionally biased toward polar residues; sequence SNENGNSKGPNKPNMT. Composition is skewed to low complexity over residues 82–93 and 118–170; these read NSNEKSNKPNNP and NTSK…NNKG. One can recognise a tr-type G domain in the interval 283 to 452; that stretch reads ERPPVVTIMG…LLVSEVEELK (170 aa). A G1 region spans residues 292–299; that stretch reads GHVDHGKT. 292–299 lines the GTP pocket; it reads GHVDHGKT. The segment at 317 to 321 is G2; that stretch reads GITQH. The interval 338–341 is G3; sequence DTPG. GTP is bound by residues 338–342 and 392–395; these read DTPGH and NKID. The interval 392 to 395 is G4; that stretch reads NKID. Residues 428–430 are G5; sequence SAK.

The protein belongs to the TRAFAC class translation factor GTPase superfamily. Classic translation factor GTPase family. IF-2 subfamily.

Its subcellular location is the cytoplasm. One of the essential components for the initiation of protein synthesis. Protects formylmethionyl-tRNA from spontaneous hydrolysis and promotes its binding to the 30S ribosomal subunits. Also involved in the hydrolysis of GTP during the formation of the 70S ribosomal complex. This chain is Translation initiation factor IF-2, found in Listeria monocytogenes serotype 4b (strain CLIP80459).